Consider the following 363-residue polypeptide: AA9 family lytic polysaccharide monooxygenase I (363 aa).

The N-terminal stretch at methionine 1–glycine 19 is a signal peptide. Positions 20 and 105 each coordinate Cu(2+). Disulfide bonds link cysteine 75-cysteine 197 and cysteine 116-cysteine 120. O2 is bound by residues histidine 183 and glutamine 192. Residue tyrosine 194 participates in Cu(2+) binding. Polar residues predominate over residues glycine 248–glycine 257. Disordered stretches follow at residues glycine 248–threonine 270 and serine 298–serine 363. Residues alanine 258–threonine 270 show a composition bias toward low complexity. Polar residues predominate over residues serine 298–proline 307. Residues serine 308–threonine 329 show a composition bias toward low complexity. Over residues threonine 342–methionine 354 the composition is skewed to basic residues.

It belongs to the polysaccharide monooxygenase AA9 family. Requires Cu(2+) as cofactor.

It is found in the secreted. It catalyses the reaction [(1-&gt;4)-beta-D-glucosyl]n+m + reduced acceptor + O2 = 4-dehydro-beta-D-glucosyl-[(1-&gt;4)-beta-D-glucosyl]n-1 + [(1-&gt;4)-beta-D-glucosyl]m + acceptor + H2O.. In terms of biological role, lytic polysaccharide monooxygenase (LPMO) that depolymerizes crystalline and amorphous polysaccharides via the oxidation of scissile alpha- or beta-(1-4)-glycosidic bonds, yielding C1 or C4 oxidation products. Catalysis by LPMOs requires the reduction of the active-site copper from Cu(II) to Cu(I) by a reducing agent and H(2)O(2) or O(2) as a cosubstrate. The protein is AA9 family lytic polysaccharide monooxygenase I of Emericella nidulans (strain FGSC A4 / ATCC 38163 / CBS 112.46 / NRRL 194 / M139) (Aspergillus nidulans).